We begin with the raw amino-acid sequence, 772 residues long: Transducin-like enhancer protein 4 (772 aa).

Disordered regions lie at residues 1–24 and 183–359; these read MIRD…PAQP and LPIK…LTGL. The segment at 1–137 is q domain; that stretch reads MIRDLSKMYP…AIIGQQLQAQ (137 aa). A GP domain region spans residues 138–205; it reads HLSHAHGLPV…HQRDRDSIKS (68 aa). Over residues 184–203 the composition is skewed to basic and acidic residues; sequence PIKDEKKHHDSDHQRDRDSI. The segment covering 204–213 has biased composition (low complexity); the sequence is KSSSVSPSAS. The interval 206 to 275 is ccN domain; that stretch reads SSVSPSASFR…SPRGSPAHSP (70 aa). Basic and acidic residues-rich tracts occupy residues 216 to 253 and 274 to 290; these read AAEK…KSDD and SPRE…KKDA. Residues 276–452 form an SP domain region; the sequence is RENGLDKPRL…GGKPAYSFHV (177 aa). Positions 291 to 306 are enriched in low complexity; that stretch reads PISPASIASSSSTPSS. Positions 307 to 316 are enriched in basic and acidic residues; the sequence is KSKEHSHNEK. Over residues 318–329 the composition is skewed to polar residues; it reads TTPVSKSNTPTP. WD repeat units lie at residues 484-522, 530-569, 574-613, 616-655, 657-696, 698-737, and 739-772; these read NHGE…NKSP, NRDN…PRIK, SSAP…LVRQ, GHTD…QLQQ, DFTS…KYQL, LHES…SIFQ, and KESS…EVIY.

It belongs to the WD repeat Groucho/TLE family. Interacts with tcf7, tcf7l1, ripply2.2/bowline, dscr6/ripply3 and foxd3. Associates with tbx6 in the presence of ripply2.2/bowline. Interacts with EFNB1 through the SP domain. Ubiquitinated by XIAP/BIRC4. As to expression, expressed at high levels in the spleen and ovary.

The protein localises to the nucleus. Its function is as follows. Transcriptional corepressor. Functions with ripply2.2/bowline to down regulate transcription of tbx6-dependent gene expression. Represses transcription of siamois and nodal3. The polypeptide is Transducin-like enhancer protein 4 (tle4) (Xenopus laevis (African clawed frog)).